Consider the following 276-residue polypeptide: 3-methyl-2-oxobutanoate hydroxymethyltransferase (276 aa).

Mg(2+)-binding residues include D44 and D83. 3-methyl-2-oxobutanoate-binding positions include D44–S45, D83, and K113. E115 is a Mg(2+) binding site. Residue E182 is the Proton acceptor of the active site.

Belongs to the PanB family. Homodecamer; pentamer of dimers. Mg(2+) serves as cofactor.

It is found in the cytoplasm. It carries out the reaction 3-methyl-2-oxobutanoate + (6R)-5,10-methylene-5,6,7,8-tetrahydrofolate + H2O = 2-dehydropantoate + (6S)-5,6,7,8-tetrahydrofolate. It participates in cofactor biosynthesis; (R)-pantothenate biosynthesis; (R)-pantoate from 3-methyl-2-oxobutanoate: step 1/2. Functionally, catalyzes the reversible reaction in which hydroxymethyl group from 5,10-methylenetetrahydrofolate is transferred onto alpha-ketoisovalerate to form ketopantoate. This is 3-methyl-2-oxobutanoate hydroxymethyltransferase from Clostridium acetobutylicum (strain ATCC 824 / DSM 792 / JCM 1419 / IAM 19013 / LMG 5710 / NBRC 13948 / NRRL B-527 / VKM B-1787 / 2291 / W).